Reading from the N-terminus, the 95-residue chain is DNA-directed RNA polymerase subunit Rpo11 (95 aa).

Belongs to the archaeal Rpo11/eukaryotic RPB11/RPC19 RNA polymerase subunit family. Part of the RNA polymerase complex.

Its subcellular location is the cytoplasm. The catalysed reaction is RNA(n) + a ribonucleoside 5'-triphosphate = RNA(n+1) + diphosphate. Its function is as follows. DNA-dependent RNA polymerase (RNAP) catalyzes the transcription of DNA into RNA using the four ribonucleoside triphosphates as substrates. The protein is DNA-directed RNA polymerase subunit Rpo11 of Methanococcus vannielii (strain ATCC 35089 / DSM 1224 / JCM 13029 / OCM 148 / SB).